A 341-amino-acid chain; its full sequence is Thiamine-phosphate synthase (341 aa).

The tract at residues 1–123 (MAVVEEQVVL…AAAAKEWRYR (123 aa)) is unknown. The segment at 61-80 (AARDTPHDPGTGLEHPDEGV) is disordered. A thiamine-phosphate synthase region spans residues 124 to 341 (VYTLESTATG…AWFLERLNRG (218 aa)). 4-amino-2-methyl-5-(diphosphooxymethyl)pyrimidine contacts are provided by residues 171-175 (QLREK) and Asn-203. The Mg(2+) site is built by Asp-204 and Asp-223. Ser-242 contacts 4-amino-2-methyl-5-(diphosphooxymethyl)pyrimidine. Residue 268-270 (TPT) coordinates 2-[(2R,5Z)-2-carboxy-4-methylthiazol-5(2H)-ylidene]ethyl phosphate. Lys-271 serves as a coordination point for 4-amino-2-methyl-5-(diphosphooxymethyl)pyrimidine. Gly-298 lines the 2-[(2R,5Z)-2-carboxy-4-methylthiazol-5(2H)-ylidene]ethyl phosphate pocket.

The protein belongs to the thiamine-phosphate synthase family. The cofactor is Mg(2+).

The catalysed reaction is 2-[(2R,5Z)-2-carboxy-4-methylthiazol-5(2H)-ylidene]ethyl phosphate + 4-amino-2-methyl-5-(diphosphooxymethyl)pyrimidine + 2 H(+) = thiamine phosphate + CO2 + diphosphate. The enzyme catalyses 2-(2-carboxy-4-methylthiazol-5-yl)ethyl phosphate + 4-amino-2-methyl-5-(diphosphooxymethyl)pyrimidine + 2 H(+) = thiamine phosphate + CO2 + diphosphate. It catalyses the reaction 4-methyl-5-(2-phosphooxyethyl)-thiazole + 4-amino-2-methyl-5-(diphosphooxymethyl)pyrimidine + H(+) = thiamine phosphate + diphosphate. It functions in the pathway cofactor biosynthesis; thiamine diphosphate biosynthesis; thiamine phosphate from 4-amino-2-methyl-5-diphosphomethylpyrimidine and 4-methyl-5-(2-phosphoethyl)-thiazole: step 1/1. Functionally, condenses 4-methyl-5-(beta-hydroxyethyl)thiazole monophosphate (THZ-P) and 2-methyl-4-amino-5-hydroxymethyl pyrimidine pyrophosphate (HMP-PP) to form thiamine monophosphate (TMP). In Gloeobacter violaceus (strain ATCC 29082 / PCC 7421), this protein is Thiamine-phosphate synthase.